Here is a 188-residue protein sequence, read N- to C-terminus: Acireductone dioxygenase 1 (188 aa).

Fe(2+) contacts are provided by histidine 90, histidine 92, glutamate 96, and histidine 135. Ni(2+) is bound by residues histidine 90, histidine 92, glutamate 96, and histidine 135.

This sequence belongs to the acireductone dioxygenase (ARD) family. Fe(2+) serves as cofactor. It depends on Ni(2+) as a cofactor.

Its subcellular location is the cytoplasm. The protein resides in the nucleus. It carries out the reaction 1,2-dihydroxy-5-(methylsulfanyl)pent-1-en-3-one + O2 = 4-methylsulfanyl-2-oxobutanoate + formate + 2 H(+). The catalysed reaction is 1,2-dihydroxy-5-(methylsulfanyl)pent-1-en-3-one + O2 = 3-(methylsulfanyl)propanoate + CO + formate + 2 H(+). It functions in the pathway amino-acid biosynthesis; L-methionine biosynthesis via salvage pathway; L-methionine from S-methyl-5-thio-alpha-D-ribose 1-phosphate: step 5/6. Catalyzes 2 different reactions between oxygen and the acireductone 1,2-dihydroxy-3-keto-5-methylthiopentene (DHK-MTPene) depending upon the metal bound in the active site. Fe-containing acireductone dioxygenase (Fe-ARD) produces formate and 2-keto-4-methylthiobutyrate (KMTB), the alpha-ketoacid precursor of methionine in the methionine recycle pathway. Ni-containing acireductone dioxygenase (Ni-ARD) produces methylthiopropionate, carbon monoxide and formate, and does not lie on the methionine recycle pathway. This chain is Acireductone dioxygenase 1, found in Vitis vinifera (Grape).